The sequence spans 379 residues: Gonadotropin-releasing hormone II receptor (379 aa).

The Extracellular segment spans residues 1 to 45; the sequence is MSGNTTLLLSNPTNVLDNSSVLNVSVSPPVLKWETPTFTTAARFR. 3 N-linked (GlcNAc...) asparagine glycosylation sites follow: Asn-4, Asn-18, and Asn-23. Residues 46–65 form a helical membrane-spanning segment; it reads VAATLVLFVFAAASNLSVLL. At 66 to 80 the chain is on the cytoplasmic side; that stretch reads SVTRGRGRRLASHLR. The helical transmembrane segment at 81-100 threads the bilayer; it reads PLIASLASADLVMTFVVMPL. At 101 to 118 the chain is on the extracellular side; the sequence is DAVWNVTVQWYAGDAMCK. N-linked (GlcNAc...) asparagine glycosylation is present at Asn-105. A disulfide bond links Cys-117 and Cys-194. Residues 119-140 traverse the membrane as a helical segment; the sequence is LMCFLKLFAMHSAAFILVVVSL. Residues 141–167 are Cytoplasmic-facing; that stretch reads DRHHAILHPLDTLDAGRRNRRMLLTAW. The helical transmembrane segment at 168–184 threads the bilayer; the sequence is ILSLLLASPQLFIFRAI. The Extracellular segment spans residues 185-210; sequence KAKGVDFVQCATHGSFQQHWQETAYN. Residues 211 to 230 traverse the membrane as a helical segment; that stretch reads MFHFVTLYVFPLLVMSLCYT. Residues 231–283 lie on the Cytoplasmic side of the membrane; sequence RILVEINRQMHRSKDKAGEPCLRRSGTDMIPKARMKTLKMTIIIVASFVICWT. The helical transmembrane segment at 284–302 threads the bilayer; the sequence is PYYLLGIWYWFQPQMLHVI. Over 303-308 the chain is Extracellular; sequence PDYVHH. The chain crosses the membrane as a helical span at residues 309–328; sequence VFFVFGNLNTCCDPVIYGFF. The Cytoplasmic segment spans residues 329–379; sequence TPSFRADLSRCFCWRNQNASAKSLPHFSGHRREVSGEAESDLGSGDQPSGQ. Positions 355 to 379 are disordered; it reads FSGHRREVSGEAESDLGSGDQPSGQ.

This sequence belongs to the G-protein coupled receptor 1 family. Phosphorylated on the C-terminal cytoplasmic tail.

It is found in the cell membrane. Receptor for gonadotropin releasing hormone II (GnRH II). This receptor mediates its action by association with G proteins that activate a phosphatidylinositol-calcium second messenger system. The polypeptide is Gonadotropin-releasing hormone II receptor (Clarias gariepinus (North African catfish)).